Consider the following 75-residue polypeptide: Small ribosomal subunit protein bS18c (75 aa).

Residues 1 to 12 (MNKSKRSFRRRL) are compositionally biased toward basic residues. Positions 1–21 (MNKSKRSFRRRLPPIGSRDQI) are disordered.

Belongs to the bacterial ribosomal protein bS18 family. As to quaternary structure, part of the 30S ribosomal subunit.

It localises to the plastid. The protein resides in the chloroplast. This chain is Small ribosomal subunit protein bS18c, found in Cycas taitungensis (Prince sago).